A 268-amino-acid chain; its full sequence is Phosphatidylglycerol--prolipoprotein diacylglyceryl transferase (268 aa).

Transmembrane regions (helical) follow at residues 14–34, 57–77, 90–110, and 117–137; these read LGPI…FAGW, LTFY…IIFY, FFLW…LIAF, and IGAN…IGLG. Arginine 140 lines the a 1,2-diacyl-sn-glycero-3-phospho-(1'-sn-glycerol) pocket. 3 consecutive transmembrane segments (helical) span residues 174 to 194, 200 to 220, and 238 to 258; these read QLFE…LVTI, YLVL…CEFF, and GQIL…AVFI.

Belongs to the Lgt family.

The protein resides in the cell inner membrane. The enzyme catalyses L-cysteinyl-[prolipoprotein] + a 1,2-diacyl-sn-glycero-3-phospho-(1'-sn-glycerol) = an S-1,2-diacyl-sn-glyceryl-L-cysteinyl-[prolipoprotein] + sn-glycerol 1-phosphate + H(+). It participates in protein modification; lipoprotein biosynthesis (diacylglyceryl transfer). In terms of biological role, catalyzes the transfer of the diacylglyceryl group from phosphatidylglycerol to the sulfhydryl group of the N-terminal cysteine of a prolipoprotein, the first step in the formation of mature lipoproteins. This is Phosphatidylglycerol--prolipoprotein diacylglyceryl transferase from Francisella tularensis subsp. novicida (strain U112).